A 139-amino-acid polypeptide reads, in one-letter code: ATP synthase epsilon chain 2 (139 aa).

Belongs to the ATPase epsilon chain family. In terms of assembly, F-type ATPases have 2 components, CF(1) - the catalytic core - and CF(0) - the membrane proton channel. CF(1) has five subunits: alpha(3), beta(3), gamma(1), delta(1), epsilon(1). CF(0) has three main subunits: a, b and c.

Its subcellular location is the cell inner membrane. In terms of biological role, produces ATP from ADP in the presence of a proton gradient across the membrane. This chain is ATP synthase epsilon chain 2, found in Paraburkholderia xenovorans (strain LB400).